We begin with the raw amino-acid sequence, 89 residues long: Large ribosomal subunit protein bL31B (89 aa).

It belongs to the bacterial ribosomal protein bL31 family. Type B subfamily. As to quaternary structure, part of the 50S ribosomal subunit.

The sequence is that of Large ribosomal subunit protein bL31B from Haemophilus ducreyi (strain 35000HP / ATCC 700724).